The primary structure comprises 346 residues: Uroporphyrinogen decarboxylase (346 aa).

Substrate contacts are provided by residues 26–30 (RQAGR), Phe45, Asp76, Tyr153, Ser208, and His323.

Belongs to the uroporphyrinogen decarboxylase family. In terms of assembly, homodimer.

The protein localises to the cytoplasm. The catalysed reaction is uroporphyrinogen III + 4 H(+) = coproporphyrinogen III + 4 CO2. It participates in porphyrin-containing compound metabolism; protoporphyrin-IX biosynthesis; coproporphyrinogen-III from 5-aminolevulinate: step 4/4. In terms of biological role, catalyzes the decarboxylation of four acetate groups of uroporphyrinogen-III to yield coproporphyrinogen-III. This chain is Uroporphyrinogen decarboxylase, found in Prochlorococcus marinus subsp. pastoris (strain CCMP1986 / NIES-2087 / MED4).